A 190-amino-acid polypeptide reads, in one-letter code: Corticoliberin (190 aa).

The N-terminal stretch at 1–24 is a signal peptide; sequence MRLRLLVSVGVLLVALLPSPPCRA. A propeptide spanning residues 25 to 147 is cleaved from the precursor; the sequence is LLSRGPIPGA…QEAPAARKRR (123 aa). Disordered stretches follow at residues 33-57 and 116-151; these read GARQ…QEPQ and RRPF…SQEP. An Alanine amide modification is found at Ala188.

This sequence belongs to the sauvagine/corticotropin-releasing factor/urotensin I family. Interacts (via C-terminus) with CRFR1 (via N-terminal extracellular domain). Produced by the hypothalamus.

It is found in the secreted. Its function is as follows. Hormone regulating the release of corticotropin from pituitary gland. Induces NLRP6 in intestinal epithelial cells, hence may influence gut microbiota profile. This chain is Corticoliberin (CRH), found in Bos taurus (Bovine).